We begin with the raw amino-acid sequence, 223 residues long: MAYEISVDEIAEGWLKLVEKIMSDGREIRDERGSLTREVMNTVVTIKNPLGRSGDFYHLPARSLINIRVPEGYFWSGEKLEKYSEQFLSDDRKGFVYTYGNRLRAHFGVDQVDRAIERLKNCKESRRATMVTWDPKIDTESDEVPCMILVDFKVREGRLFTTALWRSHDIYGAWFPNAVGLAYLADHVASEVGVEVGHITIHSISAHIYEVNFKEAKEVIKNG.

Cys146 is an active-site residue.

The protein belongs to the thymidylate synthase family. Archaeal-type ThyA subfamily. Monomer.

The protein resides in the cytoplasm. Its pathway is pyrimidine metabolism; dTTP biosynthesis. In terms of biological role, may catalyze the biosynthesis of dTMP using an unknown cosubstrate. In vitro, also catalyzes the dehalogenation of 5-bromo-deoxyuridine monophosphate (Br-dUMP) and the tritium exchange of [5-3H]deoxyuridine monophosphate ([5-3H]dUMP). This Methanothermobacter marburgensis (strain ATCC BAA-927 / DSM 2133 / JCM 14651 / NBRC 100331 / OCM 82 / Marburg) (Methanobacterium thermoautotrophicum) protein is Putative thymidylate synthase (thyA).